We begin with the raw amino-acid sequence, 283 residues long: Tumor necrosis factor receptor superfamily member 14 (283 aa).

Positions 1-38 (MEPPGDWGPPPWRSTPKTDVLRLVLYLTFLGAPCYAPA) are cleaved as a signal peptide. At 39–202 (LPSCKEDEYP…GAGTSSSHWV (164 aa)) the chain is on the extracellular side. 8 cysteine pairs are disulfide-bonded: C42–C53, C54–C67, C57–C75, C78–C93, C96–C111, C99–C119, C121–C138, and C127–C135. TNFR-Cys repeat units follow at residues 42 to 75 (CKED…GTVC), 78 to 119 (CPPG…NAVC), and 121 to 162 (CSPG…DTLC). Residue N110 is glycosylated (N-linked (GlcNAc...) asparagine). N173 is a glycosylation site (N-linked (GlcNAc...) asparagine). The chain crosses the membrane as a helical span at residues 203 to 223 (WWFLSGSLVIVIVCSTVGLII). The Cytoplasmic segment spans residues 224–283 (CVKRRKPRGDVVKVIVSVQRKRQEAEGEATVIEALQAPPDVTTVAVEETIPSFTGRSPNH). Phosphoserine is present on S240.

It belongs to the tumor necrosis factor receptor superfamily. As to quaternary structure, interacts with TRAF2, TRAF3 and TRAF5. Interacts (via CRD1/TNFR-Cys 1) with CD160; this interaction is direct. Interacts with LTA and TNFSF14. Interacts (via CRD1/TNFR-Cys 1) in cis and trans with BTLA; the cis interactions inhibits the trans interactions. In terms of assembly, (Microbial infection) Interacts with herpes simplex virus 1/HHV-1 envelope glycoprotein D. (Microbial infection) Interacts with herpes simplex virus 2/HHV-2 envelope glycoprotein D. In terms of processing, N-glycosylated. As to expression, widely expressed, with the highest expression in lung, spleen and thymus. Expressed in a subpopulation of B cells and monocytes. Expressed in naive T cells.

It localises to the cell membrane. Receptor for four distinct ligands: The TNF superfamily members TNFSF14/LIGHT and homotrimeric LTA/lymphotoxin-alpha and the immunoglobulin superfamily members BTLA and CD160, altogether defining a complex stimulatory and inhibitory signaling network. Signals via the TRAF2-TRAF3 E3 ligase pathway to promote immune cell survival and differentiation. Participates in bidirectional cell-cell contact signaling between antigen presenting cells and lymphocytes. In response to ligation of TNFSF14/LIGHT, delivers costimulatory signals to T cells, promoting cell proliferation and effector functions. Interacts with CD160 on NK cells, enhancing IFNG production and anti-tumor immune response. In the context of bacterial infection, acts as a signaling receptor on epithelial cells for CD160 from intraepithelial lymphocytes, triggering the production of antimicrobial proteins and pro-inflammatory cytokines. Upon binding to CD160 on activated CD4+ T cells, down-regulates CD28 costimulatory signaling, restricting memory and alloantigen-specific immune response. May interact in cis (on the same cell) or in trans (on other cells) with BTLA. In cis interactions, appears to play an immune regulatory role inhibiting in trans interactions in naive T cells to maintain a resting state. In trans interactions, can predominate during adaptive immune response to provide survival signals to effector T cells. In terms of biological role, (Microbial infection) Acts as a receptor for Herpes simplex virus 1/HHV-1. Functionally, (Microbial infection) Acts as a receptor for Herpes simplex virus 2/HHV-2. This chain is Tumor necrosis factor receptor superfamily member 14, found in Homo sapiens (Human).